Consider the following 129-residue polypeptide: Follitropin subunit beta (129 aa).

An N-terminal signal peptide occupies residues 1–20 (MKSVQFCFLFCCWRAICCRS). Cystine bridges form between cysteine 21-cysteine 69, cysteine 35-cysteine 84, cysteine 38-cysteine 122, cysteine 46-cysteine 100, cysteine 50-cysteine 102, and cysteine 105-cysteine 112. N-linked (GlcNAc...) asparagine glycans are attached at residues asparagine 25 and asparagine 42.

This sequence belongs to the glycoprotein hormones subunit beta family. Heterodimer. The active follitropin is a heterodimer composed of an alpha chain/CGA shared with other hormones and a unique beta chain/FSHB shown here.

It localises to the secreted. In terms of biological role, together with the alpha chain CGA constitutes follitropin, the follicle-stimulating hormone, and provides its biological specificity to the hormone heterodimer. Binds FSHR, a G protein-coupled receptor, on target cells to activate downstream signaling pathways. Follitropin is involved in follicle development and spermatogenesis in reproductive organs. This Bubalus bubalis (Domestic water buffalo) protein is Follitropin subunit beta (FSHB).